The following is a 210-amino-acid chain: Large ribosomal subunit protein bL25 (210 aa).

A disordered region spans residues 175–210; it reads IATILPPQQEEEIDSGEQQEAGQPDAAEGRETTPEE. The segment covering 201–210 has biased composition (basic and acidic residues); sequence AEGRETTPEE.

Belongs to the bacterial ribosomal protein bL25 family. CTC subfamily. In terms of assembly, part of the 50S ribosomal subunit; part of the 5S rRNA/L5/L18/L25 subcomplex. Contacts the 5S rRNA. Binds to the 5S rRNA independently of L5 and L18.

In terms of biological role, this is one of the proteins that binds to the 5S RNA in the ribosome where it forms part of the central protuberance. In Geobacillus kaustophilus (strain HTA426), this protein is Large ribosomal subunit protein bL25.